Consider the following 883-residue polypeptide: Ankyrin repeat and SAM domain-containing protein 6 (883 aa).

ANK repeat units lie at residues 8-37 (PGLQ…DPVA), 68-97 (AGNS…SVNS), 101-130 (YGWS…DVNA), 134-163 (LGAS…IVDH), 181-210 (LGIT…DPNH), 215-244 (VGWS…NPDH), 282-312 (KRRP…HVNL), 316-345 (DGAT…DMDK), 350-379 (HGWT…DVAL), and 383-414 (NGYT…QVNK). The segment at 30–50 (EPGADPVAGPEAGAEPAGPEA) is disordered. Disordered regions lie at residues 414–439 (KDRG…IPVL), 490–522 (MRAP…RREK), 566–773 (SHTC…ITDE), and 852–883 (SFES…SSRR). The segment covering 566–576 (SHTCHNGKADP) has biased composition (basic and acidic residues). Over residues 607 to 630 (PSISRSPASPASSGSFNHSPHSSG) the composition is skewed to low complexity. A compositionally biased stretch (gly residues) spans 631–640 (GASGIGGMSR). Serine 649 bears the Phosphoserine mark. The span at 649-661 (SGGSVDSVLSQIA) shows a compositional bias: polar residues. 2 stretches are compositionally biased toward low complexity: residues 687-711 (SSSP…PSSS) and 720-737 (PPSG…TLTP). A phosphoserine mark is found at serine 732 and serine 740. The span at 748-768 (SSVSSSSSHRQSKSSGGSSSG) shows a compositional bias: low complexity. Residues 771 to 834 (TDEDELTGIL…LAAISELNAG (64 aa)) enclose the SAM domain. Residues 852–862 (SFESSASNTRA) are compositionally biased toward polar residues. Positions 874–883 (RPEETVSSRR) are enriched in basic and acidic residues.

In terms of assembly, homooligomer. Interacts with NEK8. Central component of a complex containing at least ANKS6, INVS, NEK8 and NPHP3. ANKS6 may organize complex assembly by linking INVS and NPHP3 to NEK8 and INVS may target the complex to the proximal ciliary axoneme. Interacts (via SAM domain) with BICC1 (via KH domains) in an RNA-dependent manner. Interacts (via SAM domain) with ANKS3 (via SAM domain). In terms of processing, hydroxylated at Asn-129, most probably by HIF1AN. This hydroxylation results in decreased NEK8-binding. As to expression, expressed in kidney (at protein level).

The protein resides in the cell projection. The protein localises to the cilium. It is found in the cytoplasm. Required for renal function. The sequence is that of Ankyrin repeat and SAM domain-containing protein 6 (Anks6) from Mus musculus (Mouse).